Reading from the N-terminus, the 352-residue chain is MIGKRFFQTTSKKIAFAFDIDGVLFRGKKPIAGASDALKLLNRNKIPYILLTNGGGFSERARTEFISSKLDVDVSPLQIIQSHTPYKSLVNKYSRILAVGTPSVRGVAEGYGFQDVVHQTDIVRYNRDIAPFSGLSDEQVMEYSRDIPDLTTKKFDAVLVFNDPHDWAADIQIISDAINSENGMLNTLRNEKSGKPSIPIYFSNQDLLWANPYKLNRFGQGAFRLLVRRLYLELNGEPLQDYTLGKPTKLTYDFAHHVLIDWEKRLSGKIGQSVKQKLPLLGTKPSTSPFHAVFMVGDNPASDIIGAQNYGWNSCLVKTGVYNEGDDLKECKPTLIVNDVFDAVTKTLEKYA.

It belongs to the HAD-like hydrolase superfamily.

Its subcellular location is the mitochondrion. This is Mitochondrial hydrolase YKR070W from Saccharomyces cerevisiae (strain ATCC 204508 / S288c) (Baker's yeast).